We begin with the raw amino-acid sequence, 215 residues long: METQTVQQELESLPTTKMAQTNPMPGSVGPWKITIYDQENFQGKRMEFTSSCPNVSERNFDNVRSLKVECGAWVGYEHTSFCGQQFVLERGEYPRWDAWSGSNAYHIERLMSFRPICSANHKESKITIFEKENFIGRQWEICDDYPSLQAMGWPNNEVGSMKIQCGAWVCYQYPGYRGYQYILECDHHGGDYKHWREWGSHAQTSQIQSIRRIQQ.

Position 1 is an N-acetylmethionine (methionine 1). Residues 1 to 24 (METQTVQQELESLPTTKMAQTNPM) are disordered. The segment at 1–30 (METQTVQQELESLPTTKMAQTNPMPGSVGP) is N-terminal arm. Glutamate 2 carries the N-acetylalanine modification. 2 Beta/gamma crystallin 'Greek key' domains span residues 31 to 70 (WKIT…KVEC) and 71 to 117 (GAWV…RPIC). Residues cysteine 82 and cysteine 117 each carry the S-glutathionyl cysteine; alternate modification. S-methylcysteine; alternate is present on residues cysteine 82 and cysteine 117. The tract at residues 118-123 (SANHKE) is connecting peptide. Beta/gamma crystallin 'Greek key' domains follow at residues 124–165 (SKIT…KIQC) and 166–214 (GAWV…RRIQ).

This sequence belongs to the beta/gamma-crystallin family. In terms of assembly, homo/heterodimer, or complexes of higher-order. The structure of beta-crystallin oligomers seems to be stabilized through interactions between the N-terminal arms. Interacts with CRYBA1. In terms of processing, specific cleavages in the N-terminal arm occur during lens maturation and give rise to several truncated forms. Isoform A1 contains a N-acetylalanine at position 2.

In terms of biological role, crystallins are the dominant structural components of the vertebrate eye lens. The polypeptide is Beta-crystallin A3 (Bos taurus (Bovine)).